The sequence spans 25 residues: Ocellatin-P1 (25 aa).

Leu-25 is modified (leucine amide).

Expressed by the skin glands.

It localises to the secreted. Antibacterial peptide that inhibits reference strains of both Gram-negative bacteria (E.coli, E.cloacae, K.pneumoniae, P.aeruginosa) and Gram-positive bacteria (S.aureus, S.epidermidis, E.faecalis, Streptococcus group B) with relatively low potencies (MIC=25-200 uM). The peptide shows very low hemolytic activity against human erythrocytes. Wheel projection demonstrates the amphipathicity of the alpha-helices is low which may explain the low antibacterial potency. In Leptodactylus pentadactylus (Smokey jungle frog), this protein is Ocellatin-P1.